The following is a 172-amino-acid chain: 3-hydroxydecanoyl-[acyl-carrier-protein] dehydratase (172 aa).

The active site involves H71.

Belongs to the thioester dehydratase family. FabA subfamily. In terms of assembly, homodimer.

It localises to the cytoplasm. The enzyme catalyses a (3R)-hydroxyacyl-[ACP] = a (2E)-enoyl-[ACP] + H2O. It catalyses the reaction (3R)-hydroxydecanoyl-[ACP] = (2E)-decenoyl-[ACP] + H2O. The catalysed reaction is (2E)-decenoyl-[ACP] = (3Z)-decenoyl-[ACP]. It participates in lipid metabolism; fatty acid biosynthesis. Necessary for the introduction of cis unsaturation into fatty acids. Catalyzes the dehydration of (3R)-3-hydroxydecanoyl-ACP to E-(2)-decenoyl-ACP and then its isomerization to Z-(3)-decenoyl-ACP. Can catalyze the dehydratase reaction for beta-hydroxyacyl-ACPs with saturated chain lengths up to 16:0, being most active on intermediate chain length. This Escherichia coli (strain SE11) protein is 3-hydroxydecanoyl-[acyl-carrier-protein] dehydratase.